The following is a 157-amino-acid chain: Fimbrial protein Q (157 aa).

The propeptide occupies 1–6 (MNAQKG). At phenylalanine 7 the chain carries N-methylphenylalanine. Cysteine 136 and cysteine 155 are disulfide-bonded.

This sequence belongs to the N-Me-Phe pilin family. In terms of assembly, the pili are polar flexible filaments of about 5.4 nanometers diameter and 2.5 micrometers average length; they consist of only a single polypeptide chain arranged in a helical configuration of five subunits per turn in the assembled pilus.

It localises to the fimbrium. The protein is Fimbrial protein Q (tfpQ) of Moraxella bovis.